Here is a 1069-residue protein sequence, read N- to C-terminus: Epstein-Barr nuclear antigen 6 (1069 aa).

Disordered regions lie at residues 1–75 (MESF…RIRR), 353–708 (MLAT…PCQS), 733–776 (SSMS…LYPG), 884–932 (REPR…PPRL), and 1008–1069 (PLDI…SELD). A compositionally biased stretch (basic and acidic residues) spans 50–67 (PDSRDQQSRGQRRGDENR). 2 stretches are compositionally biased toward acidic residues: residues 381–391 (VELESSDDELP) and 507–524 (YDDD…EEET). Polar residues predominate over residues 543–561 (STGSAMSSSHTDPSVTQPS). Low complexity predominate over residues 689 to 708 (QQEPSSQQQPATQSTPPCQS). Positions 742–751 (SHEEQPRYED) are enriched in basic and acidic residues. Residues 1032–1048 (SQATSEAQEILSDNSEI) are compositionally biased toward polar residues.

The protein belongs to the herpesviridae EBNA-6 family. Interacts with host CTPB1; this interaction leads to gene repression, but also seems to interfere with the repressive function of CtBP pre-bound to DNA, leading to EBNA6 mediated up-regulation of many host genes. Interacts with host MYC; this interaction enhances MYC stability. Interacts (via N-terminus) with host RBPJ. Interacts (via N-terminus) with host histone H2AX; this interaction facilitates H2AX proteasomal degradation. Interacts with host TP73; this interaction inhibits TP73-mediated apoptotic pathway. Interacts (via N-terminus) with host PIM1; this interaction upregulates and stabilizes PIM1 and induces cell proliferation by inhibiting the growth suppressive properties of p21.

It localises to the host nucleus. It is found in the host nucleus matrix. Its function is as follows. Plays an essential role for the activation and immortalization of human B-cells. Represses transcription of viral promoters TP1 and Cp through interaction with host RBPJ, and inhibits EBNA2-mediated activation of these promoters. Targets host chromatin through interactions with host transcription factors, especially RBPJ and IRF4. Alternatively, EBNA6 also regulates the transcription of the EBV oncogene LMP1 in a cell cycle-dependent manner. Modulates the activity of several host proteins involved in cell cycle regulation including host cyclin A, MYC, RB, p21 and p27 mainly through binding to the host SCF(SKP2) complex. Inhibits the promoter of host H2AX and targets H2AX to proteasomal degradation in order to promote latency and cell proliferation. Upregulates host PIM1 expression and stabilization. Potentiates PIM1 to promote cell proliferation by inhibiting the growth suppressive properties of p21. The protein is Epstein-Barr nuclear antigen 6 (EBNA6) of Epstein-Barr virus (strain AG876) (HHV-4).